Here is a 582-residue protein sequence, read N- to C-terminus: Zinc finger protein 614 (582 aa).

The KRAB domain maps to 8-79 (LTLEDVAVEF…VAKIQNKNCP (72 aa)). A C2H2-type 1 zinc finger spans residues 202–224 (HACIECEQTFLRKSQLIYHENIH). A C2H2-type 2; degenerate zinc finger spans residues 254 to 278 (KICIPNEYRKGSTVNSRLIAHQQTH). C2H2-type zinc fingers lie at residues 284 to 306 (YMCS…QRTH), 312 to 334 (YVCN…QRTH), 340 to 362 (YICS…QRTH), 368 to 390 (YICS…QRSH), 396 to 418 (YICS…QRTH), 424 to 446 (YICN…QRTH), 452 to 474 (YECN…ERCH), 480 to 502 (FVCT…QRIH), 508 to 530 (YECN…QRTH), and 536 to 558 (YGCS…KKMH).

It belongs to the krueppel C2H2-type zinc-finger protein family.

It is found in the nucleus. In terms of biological role, may be involved in transcriptional regulation. This is Zinc finger protein 614 (ZNF614) from Macaca fascicularis (Crab-eating macaque).